The sequence spans 743 residues: Probable TonB-dependent siderophore receptor PiuA (743 aa).

A signal peptide spans 1-28 (MSLIRTRKKIVSSAIASSLSMIATTAMA). Residues 61–167 (PLLDTPKSVS…VGGSINMISK (107 aa)) enclose the TBDR plug domain. The TBDR beta-barrel domain occupies 172 to 743 (GDFLEGSVAA…SAVLAVNFKY (572 aa)). Cystine bridges form between C408/C416 and C627/C632.

This sequence belongs to the TonB-dependent receptor family.

It is found in the cell outer membrane. Functionally, probably involved in the initial step of iron uptake by binding iron chelating siderophores, thereby allowing extraction of iron from the environment. May bind the siderophore, ferric enterobactin, with micromolar affinity. The chain is Probable TonB-dependent siderophore receptor PiuA from Acinetobacter baumannii (strain ATCC 19606 / DSM 30007 / JCM 6841 / CCUG 19606 / CIP 70.34 / NBRC 109757 / NCIMB 12457 / NCTC 12156 / 81).